A 465-amino-acid polypeptide reads, in one-letter code: CUGBP Elav-like family member 3 (465 aa).

RRM domains are found at residues 7 to 88 and 95 to 174; these read IKLF…PADS and KLFV…FADT. 2 disordered regions span residues 283–311 and 345–379; these read PVPT…QSPA and PPAL…GPDG. Pro residues predominate over residues 345 to 358; sequence PPALVAQQPPPPPQ. The segment covering 359–373 has biased composition (low complexity); it reads QQQQQQQQQQQQQQQ. The RRM 3 domain occupies 380–458; it reads CNIFIYHLPQ…KRLKVQLKRP (79 aa).

It belongs to the CELF/BRUNOL family.

The protein localises to the nucleus. It localises to the cytoplasm. Its function is as follows. RNA-binding protein involved in the regulation of pre-mRNA alternative splicing. Mediates exon inclusion and/or exclusion in pre-mRNA that are subject to tissue-specific and developmentally regulated alternative splicing. Specifically activates exon 5 inclusion of cardiac isoforms of TNNT2 during heart remodeling at the juvenile to adult transition. Activates the splicing of MAPT/Tau exon 10. Binds to muscle-specific splicing enhancer (MSE) intronic sites flanking the alternative exon 5 of TNNT2 pre-mRNA. The chain is CUGBP Elav-like family member 3 (Celf3) from Mus musculus (Mouse).